The following is a 501-amino-acid chain: Ribose import ATP-binding protein RbsA (501 aa).

ABC transporter domains lie at 5–241 and 252–495; these read LQLQ…VGRK and APGE…VGKQ. 37 to 44 is a binding site for ATP; the sequence is GENGAGKS.

Belongs to the ABC transporter superfamily. Ribose importer (TC 3.A.1.2.1) family. As to quaternary structure, the complex is composed of an ATP-binding protein (RbsA), two transmembrane proteins (RbsC) and a solute-binding protein (RbsB).

It is found in the cell inner membrane. It carries out the reaction D-ribose(out) + ATP + H2O = D-ribose(in) + ADP + phosphate + H(+). Its function is as follows. Part of the ABC transporter complex RbsABC involved in ribose import. Responsible for energy coupling to the transport system. The polypeptide is Ribose import ATP-binding protein RbsA (Pectobacterium atrosepticum (strain SCRI 1043 / ATCC BAA-672) (Erwinia carotovora subsp. atroseptica)).